The sequence spans 1096 residues: Serine-repeat antigen protein 3 (1096 aa).

Residues 1 to 21 (MARLSSIVFIICLLLCNNAIS) form the signal peptide. The disordered stretch occupies residues 28-205 (PSSGGTLSGG…RSPPPQVNNI (178 aa)). The span at 77–97 (NSDSTGDSSLGSTGSNGSQPA) shows a compositional bias: low complexity. N-linked (GlcNAc...) asparagine glycosylation occurs at Asn92. Over residues 102–113 (KEPEPTTPKEPE) the composition is skewed to basic and acidic residues. Positions 123 to 147 (VTPQKTAETASGKQVSPTPSENPPS) are enriched in polar residues. Over residues 149–161 (DTPKPESSSEKKV) the composition is skewed to basic and acidic residues. Residues Asn204, Asn607, Asn637, Asn662, Asn671, Asn712, Asn892, and Asn951 are each glycosylated (N-linked (GlcNAc...) asparagine). Disordered regions lie at residues 916-952 (EAKN…QANS) and 964-1006 (NQRT…ASAN). Composition is skewed to polar residues over residues 925–952 (QNYG…QANS) and 964–975 (NQRTADSNPNAQ). A compositionally biased stretch (low complexity) spans 976 to 1006 (STPSPNTTVTDTVNSNTANSNTANSNTASAN). Residues Asn981 and Asn1039 are each glycosylated (N-linked (GlcNAc...) asparagine).

This sequence belongs to the peptidase C1 family. In terms of processing, proteolytically cleaved in both blood and liver stage parasites. Precursor of 130 kDa is processed into 72 kDa and 55 kDa forms. Proteolytically cleaved by SUB1.

It localises to the cell membrane. The protein resides in the parasitophorous vacuole. The protein localises to the secreted. Its subcellular location is the host cytoplasm. Putative cysteine protease. Probably involved in merozoite release from the parasitophorous vacuole during liver stages. This is Serine-repeat antigen protein 3 from Plasmodium berghei (strain Anka).